The chain runs to 537 residues: Apoptosis inhibitor 5-like protein API5 (537 aa).

Residues 9 to 363 (AEVERLYELG…TTNSLCGYKI (355 aa)) form an ARM-like and Heat-like helical repeats region. The segment at 465–537 (WMEQPKKPAP…GGRGRGWGYR (73 aa)) is disordered. The segment covering 474-492 (PTTTGGKRSQPATNGNTPA) has biased composition (polar residues).

The protein belongs to the API5 family. In terms of assembly, interacts with AIP1 and AIP2.

Its subcellular location is the nucleus. Functionally, putative anti-apoptotic factor involved in the regulation of tapetal programmed cell death (PCD) and degeneration during anther development. Interacts directly with the DEAD-box ATP-dependent RNA helicases AIP1 and AIP2 that form dimers and bind the promoter region of the cysteine protease CP1 involved in tapetum PCD. The protein is Apoptosis inhibitor 5-like protein API5 of Oryza sativa subsp. japonica (Rice).